Consider the following 164-residue polypeptide: uncharacterized protein (164 aa).

Over residues 1-29 (MLCVRSSSSNLESDTYLSRYSTRASAGTG) the composition is skewed to polar residues. Positions 1 to 62 (MLCVRSSSSN…SKPSNNKNID (62 aa)) are disordered. Residues 43–62 (SSDSSSSSSESKPSNNKNID) are compositionally biased toward low complexity.

This is an uncharacterized protein from Schizosaccharomyces pombe (strain 972 / ATCC 24843) (Fission yeast).